The sequence spans 505 residues: Calcium/calmodulin-dependent protein kinase kinase 1 (505 aa).

Positions 27–66 are disordered; it reads HLEEAEEGPEPASNGVDPPPRARAASVIPGSASRPTPVRP. Phosphoserine occurs at positions 67 and 74. At arginine 78 the chain carries Asymmetric dimethylarginine. Serine 100 is modified (phosphoserine). Threonine 108 carries the phosphothreonine modification. One can recognise a Protein kinase domain in the interval 128–409; sequence YKLQSEIGKG…VSDIKLHPWV (282 aa). ATP-binding positions include 134–142 and lysine 157; that span reads IGKGAYGVV. Residues 167-189 form an RP domain region; that stretch reads QYGFPRRPPPRGSQAPQGGPAKQ. Aspartate 275 serves as the catalytic Proton acceptor. Positions 435–440 are autoinhibitory domain; sequence KNSVKL. The tract at residues 438 to 463 is calmodulin-binding; sequence VKLIPSWTTVILVKSMLRKRSFGNPF. A phosphoserine mark is found at serine 458, serine 475, and serine 492. The tract at residues 460 to 505 is disordered; that stretch reads GNPFEPQARREERSMSAPGNLLLKEGCGEGGKSPELPGVQEDEAAS.

It belongs to the protein kinase superfamily. Ser/Thr protein kinase family. In terms of assembly, interacts with CAMK4 and calmodulin. In terms of processing, appears to be autophosphorylated. Phosphorylated at multiple sites by PRCAKA/PKA. Phosphorylation of Ser-458 is blocked upon binding to Ca(2+)/calmodulin. May be phosphorylated by CAMK1 and CAMK4. In terms of tissue distribution, mostly expressed in the brain with higher levels in cortex and hippocampus. Lower expression levels were detected in striatum, nucleus accumbens and cerebellum (at protein level). Abundant in forebrain, weaker in cerebellum and also detected in thymus and spleen.

It is found in the cytoplasm. It localises to the nucleus. The catalysed reaction is L-seryl-[protein] + ATP = O-phospho-L-seryl-[protein] + ADP + H(+). It carries out the reaction L-threonyl-[protein] + ATP = O-phospho-L-threonyl-[protein] + ADP + H(+). Its activity is regulated as follows. Activated by Ca(2+)/calmodulin. Binding of calmodulin may relieve intrasteric autoinhibition. Partially inhibited upon phosphorylation by PRCAKA/PKA. May be regulated through phosphorylation by CAMK1 and CAMK4. Calcium/calmodulin-dependent protein kinase that belongs to a proposed calcium-triggered signaling cascade involved in a number of cellular processes. Phosphorylates CAMK1, CAMK1D, CAMK1G and CAMK4. Involved in regulating cell apoptosis. Promotes cell survival by phosphorylating AKT1/PKB that inhibits pro-apoptotic BAD/Bcl2-antagonist of cell death. This is Calcium/calmodulin-dependent protein kinase kinase 1 (Camkk1) from Rattus norvegicus (Rat).